A 158-amino-acid polypeptide reads, in one-letter code: Small ribosomal subunit protein uS7c (158 aa).

Belongs to the universal ribosomal protein uS7 family. In terms of assembly, part of the 30S ribosomal subunit.

It is found in the plastid. The protein resides in the chloroplast. Its function is as follows. One of the primary rRNA binding proteins, it binds directly to 16S rRNA where it nucleates assembly of the head domain of the 30S subunit. The protein is Small ribosomal subunit protein uS7c (rps7) of Trieres chinensis (Marine centric diatom).